The following is a 243-amino-acid chain: MNNLLLRSSADIIALVPAAGIGSRMNSDCPKQYLSIAGKTIIEHTLSALLDHPRIRHVVIVLNPTDTQFQSLEVVSDSRITTVTGGEQRADSVLAGLNHLAHVTGNDNCWVLVHDAARPCLHHDDLDRLLQLAEADEQGNMACGGILASPVRDTMKRGRVGQIIDHTVERQDLWHALTPQFFPLMLLRDCLSKALSQHANITDEASALEYCGYQPVLVNGRSDNIKVTCPEDLALAEFYLSRK.

Belongs to the IspD/TarI cytidylyltransferase family. IspD subfamily. Homodimer.

It catalyses the reaction 2-C-methyl-D-erythritol 4-phosphate + CTP + H(+) = 4-CDP-2-C-methyl-D-erythritol + diphosphate. It functions in the pathway isoprenoid biosynthesis; isopentenyl diphosphate biosynthesis via DXP pathway; isopentenyl diphosphate from 1-deoxy-D-xylulose 5-phosphate: step 2/6. Catalyzes the formation of 4-diphosphocytidyl-2-C-methyl-D-erythritol from CTP and 2-C-methyl-D-erythritol 4-phosphate (MEP). The protein is 2-C-methyl-D-erythritol 4-phosphate cytidylyltransferase of Photorhabdus laumondii subsp. laumondii (strain DSM 15139 / CIP 105565 / TT01) (Photorhabdus luminescens subsp. laumondii).